Consider the following 239-residue polypeptide: DNA repair protein RecO (239 aa).

It belongs to the RecO family.

Its function is as follows. Involved in DNA repair and RecF pathway recombination. This chain is DNA repair protein RecO, found in Glaesserella parasuis serovar 5 (strain SH0165) (Haemophilus parasuis).